A 267-amino-acid polypeptide reads, in one-letter code: Thiamine thiazole synthase (267 aa).

Residues serine 41, 60-61 (ER), glycine 68, valine 132, and 160-162 (HVD) contribute to the NAD(+) site. Fe cation is bound by residues aspartate 162 and histidine 177. Methionine 227 provides a ligand contact to NAD(+). Arginine 237 contributes to the glycine binding site.

This sequence belongs to the THI4 family. Homooctamer; tetramer of dimers. The cofactor is Fe(2+).

It catalyses the reaction hydrogen sulfide + glycine + NAD(+) = ADP-5-ethyl-4-methylthiazole-2-carboxylate + nicotinamide + 3 H2O + H(+). Its pathway is cofactor biosynthesis; thiamine diphosphate biosynthesis. In terms of biological role, involved in the biosynthesis of the thiazole moiety of thiamine. Catalyzes the conversion of NAD and glycine to adenosine diphosphate 5-(2-hydroxyethyl)-4-methylthiazole-2-carboxylate (ADT), an adenylated thiazole intermediate, using free sulfide as a source of sulfur. This Saccharolobus islandicus (strain L.S.2.15 / Lassen #1) (Sulfolobus islandicus) protein is Thiamine thiazole synthase.